The sequence spans 372 residues: Queuine tRNA-ribosyltransferase (372 aa).

Asp90 (proton acceptor) is an active-site residue. Substrate is bound by residues 90–94, Asp144, Gln193, and Gly220; that span reads DSGGF. Positions 251-257 are RNA binding; the sequence is GVGTPED. Asp270 acts as the Nucleophile in catalysis. Residues 275–279 are RNA binding; important for wobble base 34 recognition; the sequence is TRNAR. 4 residues coordinate Zn(2+): Cys308, Cys310, Cys313, and His339.

Belongs to the queuine tRNA-ribosyltransferase family. Homodimer. Within each dimer, one monomer is responsible for RNA recognition and catalysis, while the other monomer binds to the replacement base PreQ1. It depends on Zn(2+) as a cofactor.

The enzyme catalyses 7-aminomethyl-7-carbaguanine + guanosine(34) in tRNA = 7-aminomethyl-7-carbaguanosine(34) in tRNA + guanine. Its pathway is tRNA modification; tRNA-queuosine biosynthesis. Catalyzes the base-exchange of a guanine (G) residue with the queuine precursor 7-aminomethyl-7-deazaguanine (PreQ1) at position 34 (anticodon wobble position) in tRNAs with GU(N) anticodons (tRNA-Asp, -Asn, -His and -Tyr). Catalysis occurs through a double-displacement mechanism. The nucleophile active site attacks the C1' of nucleotide 34 to detach the guanine base from the RNA, forming a covalent enzyme-RNA intermediate. The proton acceptor active site deprotonates the incoming PreQ1, allowing a nucleophilic attack on the C1' of the ribose to form the product. After dissociation, two additional enzymatic reactions on the tRNA convert PreQ1 to queuine (Q), resulting in the hypermodified nucleoside queuosine (7-(((4,5-cis-dihydroxy-2-cyclopenten-1-yl)amino)methyl)-7-deazaguanosine). The polypeptide is Queuine tRNA-ribosyltransferase (Sulfurimonas denitrificans (strain ATCC 33889 / DSM 1251) (Thiomicrospira denitrificans (strain ATCC 33889 / DSM 1251))).